A 127-amino-acid polypeptide reads, in one-letter code: Small ribosomal subunit protein bS6 (127 aa).

Belongs to the bacterial ribosomal protein bS6 family.

Its function is as follows. Binds together with bS18 to 16S ribosomal RNA. This chain is Small ribosomal subunit protein bS6, found in Buchnera aphidicola subsp. Cinara cedri (strain Cc).